Consider the following 99-residue polypeptide: Cell cycle protein GpsB (99 aa).

The stretch at 34 to 71 (LDMIIKDYETFHQEIEELQQENLQLKKQLEEASKKQPV) forms a coiled coil.

This sequence belongs to the GpsB family. Forms polymers through the coiled coil domains. Interacts with PBP1, MreC and EzrA.

It localises to the cytoplasm. Its function is as follows. Divisome component that associates with the complex late in its assembly, after the Z-ring is formed, and is dependent on DivIC and PBP2B for its recruitment to the divisome. Together with EzrA, is a key component of the system that regulates PBP1 localization during cell cycle progression. Its main role could be the removal of PBP1 from the cell pole after pole maturation is completed. Also contributes to the recruitment of PBP1 to the division complex. Not essential for septum formation. This chain is Cell cycle protein GpsB, found in Bacillus velezensis (strain DSM 23117 / BGSC 10A6 / LMG 26770 / FZB42) (Bacillus amyloliquefaciens subsp. plantarum).